Consider the following 98-residue polypeptide: Large ribosomal subunit protein uL23c (98 aa).

The protein belongs to the universal ribosomal protein uL23 family. In terms of assembly, part of the 50S ribosomal subunit.

It localises to the plastid. Its subcellular location is the chloroplast. Binds to 23S rRNA. This Thalassiosira pseudonana (Marine diatom) protein is Large ribosomal subunit protein uL23c (rpl23).